Consider the following 200-residue polypeptide: Superoxide dismutase [Fe] (200 aa).

Fe cation contacts are provided by His-28, His-82, Asp-165, and His-169.

The protein belongs to the iron/manganese superoxide dismutase family. As to quaternary structure, homodimer. The cofactor is Fe cation.

The catalysed reaction is 2 superoxide + 2 H(+) = H2O2 + O2. In terms of biological role, destroys superoxide anion radicals which are normally produced within the cells and which are toxic to biological systems. This Rhodobacter capsulatus (Rhodopseudomonas capsulata) protein is Superoxide dismutase [Fe] (sodB).